The sequence spans 373 residues: Histidinol-phosphate aminotransferase (373 aa).

Lys-231 carries the post-translational modification N6-(pyridoxal phosphate)lysine.

The protein belongs to the class-II pyridoxal-phosphate-dependent aminotransferase family. Histidinol-phosphate aminotransferase subfamily. The cofactor is pyridoxal 5'-phosphate.

It carries out the reaction L-histidinol phosphate + 2-oxoglutarate = 3-(imidazol-4-yl)-2-oxopropyl phosphate + L-glutamate. Its pathway is amino-acid biosynthesis; L-histidine biosynthesis; L-histidine from 5-phospho-alpha-D-ribose 1-diphosphate: step 7/9. The protein is Histidinol-phosphate aminotransferase (hisC) of Methanocaldococcus jannaschii (strain ATCC 43067 / DSM 2661 / JAL-1 / JCM 10045 / NBRC 100440) (Methanococcus jannaschii).